The sequence spans 556 residues: Large cysteine-rich periplasmic protein OmcB (556 aa).

The signal sequence occupies residues 1–22 (MSKLIRRVVTVLALTSMASCFA). A propeptide spanning residues 23–40 (SGGIEAAVAESLITKIVA) is cleaved from the precursor.

Part of a disulfide cross-linked outer membrane complex (COMC) composed of the major outer membrane porin (MOMP), the small cysteine-rich protein (OmcA) and the large cysteine-rich periplasmic protein (OmcB).

Its subcellular location is the periplasm. Its function is as follows. In elementary bodies (EBs, the infectious stage, which is able to survive outside the host cell) provides the structural integrity of the outer envelope through disulfide cross-links with the small cysteine-rich protein and the major outer membrane porin. It has been described in publications as the Sarkosyl-insoluble COMC (Chlamydia outer membrane complex), and serves as the functional equivalent of peptidoglycan. In Chlamydia pneumoniae (Chlamydophila pneumoniae), this protein is Large cysteine-rich periplasmic protein OmcB (omcB).